A 155-amino-acid chain; its full sequence is Cyanate hydratase (155 aa).

Residues arginine 95, glutamate 98, and serine 121 contribute to the active site.

Belongs to the cyanase family.

The catalysed reaction is cyanate + hydrogencarbonate + 3 H(+) = NH4(+) + 2 CO2. Its function is as follows. Catalyzes the reaction of cyanate with bicarbonate to produce ammonia and carbon dioxide. In Pseudomonas syringae pv. syringae (strain B728a), this protein is Cyanate hydratase.